A 150-amino-acid polypeptide reads, in one-letter code: Large ribosomal subunit protein bL9 (150 aa).

Belongs to the bacterial ribosomal protein bL9 family.

In terms of biological role, binds to the 23S rRNA. The protein is Large ribosomal subunit protein bL9 of Desulforudis audaxviator (strain MP104C).